Consider the following 921-residue polypeptide: Dual serine/threonine and tyrosine protein kinase (921 aa).

The region spanning 645-899 (PKLGRELGRG…PLLGIVEPSL (255 aa)) is the Protein kinase domain. ATP contacts are provided by residues 651–659 (LGRGQYGVV) and K674. D770 acts as the Proton acceptor in catalysis.

The protein belongs to the protein kinase superfamily. Ser/Thr protein kinase family.

Its subcellular location is the cytoplasm. The protein resides in the cell membrane. The protein localises to the apical cell membrane. It localises to the basolateral cell membrane. It is found in the cell junction. It catalyses the reaction L-seryl-[protein] + ATP = O-phospho-L-seryl-[protein] + ADP + H(+). It carries out the reaction L-threonyl-[protein] + ATP = O-phospho-L-threonyl-[protein] + ADP + H(+). The enzyme catalyses L-tyrosyl-[protein] + ATP = O-phospho-L-tyrosyl-[protein] + ADP + H(+). May act as a positive regulator of ERK phosphorylation downstream of fibroblast growth factor-receptor activation. May induce both caspase-dependent apoptosis and caspase-independent cell death. May play a role in the embryonic development. This is Dual serine/threonine and tyrosine protein kinase (dstyk) from Takifugu rubripes (Japanese pufferfish).